The sequence spans 526 residues: Tyrosine 2,3-aminomutase (526 aa).

The active-site Proton donor/acceptor is tyrosine 41. Histidine 71 is a substrate binding site. Positions 130-132 form a cross-link, 5-imidazolinone (Ala-Gly); that stretch reads ASG. 2,3-didehydroalanine (Ser) is present on serine 131. Substrate contacts are provided by asparagine 183 and arginine 288.

It belongs to the TAL/TAM family. As to quaternary structure, homotetramer; dimer of dimers. In terms of processing, contains an active site 4-methylidene-imidazol-5-one (MIO), which is formed autocatalytically by cyclization and dehydration of residues Ala-Ser-Gly.

It catalyses the reaction L-tyrosine = 3-amino-3-(4-hydroxyphenyl)propanoate. The catalysed reaction is L-tyrosine = (E)-4-coumarate + NH4(+). Functionally, has aminomutase and, to a much lesser extent, ammonia-lyase activity. Primarily, catalyzes the rearrangement of L-tyrosine to S-beta-tyrosine, which is probably incorporated into secondary metabolite myxovalargin. The aminomutase activity exclusively produces S-beta-tyrosine. This is Tyrosine 2,3-aminomutase from Myxococcus fulvus.